The following is a 334-amino-acid chain: Phosphate acyltransferase (334 aa).

It belongs to the PlsX family. In terms of assembly, homodimer. Probably interacts with PlsY.

The protein resides in the cytoplasm. The catalysed reaction is a fatty acyl-[ACP] + phosphate = an acyl phosphate + holo-[ACP]. It functions in the pathway lipid metabolism; phospholipid metabolism. Catalyzes the reversible formation of acyl-phosphate (acyl-PO(4)) from acyl-[acyl-carrier-protein] (acyl-ACP). This enzyme utilizes acyl-ACP as fatty acyl donor, but not acyl-CoA. The protein is Phosphate acyltransferase of Desulfitobacterium hafniense (strain DSM 10664 / DCB-2).